Reading from the N-terminus, the 640-residue chain is Chaperone protein DnaK (640 aa).

The residue at position 196 (Thr-196) is a Phosphothreonine; by autocatalysis. Disordered regions lie at residues 510–530 (NDAKAHAEEDAKRKEEVETKN) and 598–640 (AADA…DKDK).

The protein belongs to the heat shock protein 70 family.

Functionally, acts as a chaperone. The protein is Chaperone protein DnaK of Prosthecochloris aestuarii (strain DSM 271 / SK 413).